The chain runs to 247 residues: NH(3)-dependent NAD(+) synthetase (247 aa).

Position 29–36 (29–36) interacts with ATP; the sequence is GISGGIDS. Asp35 serves as a coordination point for Mg(2+). Arg120 contributes to the deamido-NAD(+) binding site. An ATP-binding site is contributed by Thr140. Residue Glu145 coordinates Mg(2+). Positions 153 and 160 each coordinate deamido-NAD(+). Positions 169 and 191 each coordinate ATP. 237 to 238 contributes to the deamido-NAD(+) binding site; it reads HK.

Belongs to the NAD synthetase family. As to quaternary structure, homodimer.

It catalyses the reaction deamido-NAD(+) + NH4(+) + ATP = AMP + diphosphate + NAD(+) + H(+). Its pathway is cofactor biosynthesis; NAD(+) biosynthesis; NAD(+) from deamido-NAD(+) (ammonia route): step 1/1. Its function is as follows. Catalyzes the ATP-dependent amidation of deamido-NAD to form NAD. Uses ammonia as a nitrogen source. This chain is NH(3)-dependent NAD(+) synthetase, found in Alkaliphilus metalliredigens (strain QYMF).